We begin with the raw amino-acid sequence, 420 residues long: Glutamate-1-semialdehyde 2,1-aminomutase (420 aa).

Lys259 bears the N6-(pyridoxal phosphate)lysine mark.

It belongs to the class-III pyridoxal-phosphate-dependent aminotransferase family. HemL subfamily. Homodimer. It depends on pyridoxal 5'-phosphate as a cofactor.

The protein localises to the cytoplasm. The enzyme catalyses (S)-4-amino-5-oxopentanoate = 5-aminolevulinate. It functions in the pathway porphyrin-containing compound metabolism; protoporphyrin-IX biosynthesis; 5-aminolevulinate from L-glutamyl-tRNA(Glu): step 2/2. This is Glutamate-1-semialdehyde 2,1-aminomutase from Nautilia profundicola (strain ATCC BAA-1463 / DSM 18972 / AmH).